A 248-amino-acid chain; its full sequence is 3-deoxy-manno-octulosonate cytidylyltransferase (248 aa).

Belongs to the KdsB family. It depends on Mg(2+) as a cofactor.

Its subcellular location is the cytoplasm. It catalyses the reaction 3-deoxy-alpha-D-manno-oct-2-ulosonate + CTP = CMP-3-deoxy-beta-D-manno-octulosonate + diphosphate. It participates in nucleotide-sugar biosynthesis; CMP-3-deoxy-D-manno-octulosonate biosynthesis; CMP-3-deoxy-D-manno-octulosonate from 3-deoxy-D-manno-octulosonate and CTP: step 1/1. It functions in the pathway bacterial outer membrane biogenesis; lipopolysaccharide biosynthesis. Functionally, activates KDO (a required 8-carbon sugar) for incorporation into bacterial lipopolysaccharide in Gram-negative bacteria. This is 3-deoxy-manno-octulosonate cytidylyltransferase from Escherichia coli O157:H7.